Consider the following 105-residue polypeptide: Large ribosomal subunit protein uL24 (105 aa).

It belongs to the universal ribosomal protein uL24 family. Part of the 50S ribosomal subunit.

Its function is as follows. One of two assembly initiator proteins, it binds directly to the 5'-end of the 23S rRNA, where it nucleates assembly of the 50S subunit. One of the proteins that surrounds the polypeptide exit tunnel on the outside of the subunit. This is Large ribosomal subunit protein uL24 from Sphingopyxis alaskensis (strain DSM 13593 / LMG 18877 / RB2256) (Sphingomonas alaskensis).